A 493-amino-acid polypeptide reads, in one-letter code: Reticulophagy regulator 1 (493 aa).

The segment at methionine 1–glutamine 52 is disordered. Residues methionine 1–glutamate 55 are Cytoplasmic-facing. The segment covering glycine 37–glutamine 52 has biased composition (low complexity). Residues alanine 56–glycine 76 traverse the membrane as a helical segment. Residues glycine 77–arginine 87 are Lumenal-facing. The interval aspartate 80–phenylalanine 229 is reticulon homology domain. A helical transmembrane segment spans residues proline 88 to threonine 108. Residues proline 109–histidine 114 are Cytoplasmic-facing. A helical transmembrane segment spans residues leucine 115 to serine 135. Topologically, residues arginine 136–threonine 204 are lumenal. Serine 145 carries the phosphoserine modification. Residue serine 147 is modified to Phosphoserine; by CAMK2B. Phosphoserine is present on serine 149. Residues isoleucine 205 to leucine 225 traverse the membrane as a helical segment. Over cysteine 226–histidine 493 the chain is Cytoplasmic. Residues phenylalanine 315 to aspartate 326 show a composition bias toward polar residues. Disordered regions lie at residues phenylalanine 315–leucine 394 and alanine 435–histidine 493. Positions aspartate 330–serine 344 are enriched in basic and acidic residues. Threonine 353 is subject to Phosphothreonine. The span at glutamate 368–serine 388 shows a compositional bias: basic and acidic residues. Positions glutamate 441 to glutamate 463 are enriched in acidic residues. The LIR motif motif lies at aspartate 449–leucine 454. Polar residues predominate over residues glycine 467 to leucine 486.

The protein belongs to the RETREG family. In terms of assembly, homooligomer; oligomerization is enhanced following endoplasmic reticulum stress and is mediated by the reticulon homology domain. Interacts with ATG8 family modifier proteins MAP1LC3A, MAP1LC3B, GABARAP, GABARAPL1 and GABARAPL2. Post-translationally, phosphorylation at Ser-147 by CAMK2B enhances oligomerization and membrane scission and reticulophagy activity.

It is found in the golgi apparatus. It localises to the cis-Golgi network membrane. Its subcellular location is the endoplasmic reticulum membrane. Functionally, endoplasmic reticulum (ER)-anchored autophagy regulator which mediates ER delivery into lysosomes through sequestration into autophagosomes. Promotes membrane remodeling and ER scission via its membrane bending capacity and targets the fragments into autophagosomes via interaction with ATG8 family proteins. Active under basal conditions. Required for collagen quality control in a LIR motif-dependent manner. Required for long-term survival of nociceptive and autonomic ganglion neurons. The chain is Reticulophagy regulator 1 (RETREG1) from Bos taurus (Bovine).